The sequence spans 301 residues: DSC E3 ubiquitin ligase complex subunit B (301 aa).

A run of 3 helical transmembrane segments spans residues 9-29, 52-72, and 90-110; these read APIT…LSIL, LATW…AAML, and TFII…LVLL. Over residues 268–284 the composition is skewed to low complexity; that stretch reads AAAAASGNAGSASEASG. Residues 268–301 form a disordered region; the sequence is AAAAASGNAGSASEASGQRQRRREGGIMDRLRAL. Positions 290–301 are enriched in basic and acidic residues; that stretch reads REGGIMDRLRAL.

Component of the DSC E3 ubiquitin ligase complex composed of dscA, dscB, dscC and dscD.

Its subcellular location is the endoplasmic reticulum membrane. The catalysed reaction is S-ubiquitinyl-[E2 ubiquitin-conjugating enzyme]-L-cysteine + [acceptor protein]-L-lysine = [E2 ubiquitin-conjugating enzyme]-L-cysteine + N(6)-ubiquitinyl-[acceptor protein]-L-lysine.. Its pathway is protein modification; protein ubiquitination. Component of the DSC E3 ubiquitin ligase complex which is required for the srbA transcriptional activator proteolytic cleavage to release the soluble transcription factor from the membrane in low oxygen or sterol conditions. Required for growth during hypoxia and triazole drug susceptibility, as well as for virulence in a murine model of invasive pulmonary aspergillosis (IPA). This is DSC E3 ubiquitin ligase complex subunit B from Aspergillus fumigatus (strain ATCC MYA-4609 / CBS 101355 / FGSC A1100 / Af293) (Neosartorya fumigata).